The primary structure comprises 237 residues: MTPHINAPAGAFAETVLFCGDPLRAQFIAHHFLKNAQEITNVRAMLGFTGEYQQHKLSVMGHGMGIPSCSIYAKELITEYGVKNLIRVGSCGAVLDEIKLHDVIIALSAATDSNVNRLRFRHYDFAATADYSIFSALIAAAAQQNITARVGTVFSTDSFYHADTELMDLLKRFHILGVEMEAAGLFGVAAEYGARAGCILTVSDHILRQETTTALERQTRFHDMITIALEAAVRLAH.

Position 4 (H4) interacts with a purine D-ribonucleoside. Residues G20, R24, R43, and 87–90 (RVGS) each bind phosphate. Residues 179-181 (EME) and 203-204 (SD) each bind a purine D-ribonucleoside. Residue D204 is the Proton donor of the active site.

Belongs to the PNP/UDP phosphorylase family. Homohexamer; trimer of homodimers.

The catalysed reaction is a purine D-ribonucleoside + phosphate = a purine nucleobase + alpha-D-ribose 1-phosphate. The enzyme catalyses a purine 2'-deoxy-D-ribonucleoside + phosphate = a purine nucleobase + 2-deoxy-alpha-D-ribose 1-phosphate. Its function is as follows. Catalyzes the reversible phosphorolytic breakdown of the N-glycosidic bond in the beta-(deoxy)ribonucleoside molecules, with the formation of the corresponding free purine bases and pentose-1-phosphate. The polypeptide is Purine nucleoside phosphorylase DeoD-type (Dichelobacter nodosus (strain VCS1703A)).